The chain runs to 492 residues: Solute carrier family 2, facilitated glucose transporter member 1 (492 aa).

Methionine 1 is modified (N-acetylmethionine). Topologically, residues 1–11 (MEPTSKKLTGR) are cytoplasmic. Residues 12 to 33 (LMLAVGGAVLGSLQFGYNTGVI) form a helical membrane-spanning segment. Topologically, residues 34–66 (NAPQKVIEEFYNQTWVQRYGEPIPPATLTTLWS) are extracellular. The N-linked (GlcNAc...) asparagine glycan is linked to asparagine 45. A helical transmembrane segment spans residues 67-87 (LSVAIFSVGGMIGSFSVGLFV). At 88–90 (NRF) the chain is on the cytoplasmic side. A helical membrane pass occupies residues 91-112 (GRRNSMLMMNLLAFVSAVLMGF). The Extracellular segment spans residues 113–120 (SKLGKSFE). A helical transmembrane segment spans residues 121 to 144 (MLILGRFIIGVYCGLTTGFVPMYV). Residues 145 to 155 (GEVSPTELRGA) are Cytoplasmic-facing. Residues 156 to 176 (LGTLHQLGIVVGILIAQVFGL) traverse the membrane as a helical segment. Glutamine 161 is a binding site for D-glucose. Over 177-185 (DSIMGNQEL) the chain is Extracellular. The helical transmembrane segment at 186-206 (WPLLLSVIFIPALLQCILLPF) threads the bilayer. Over 207–271 (CPESPRFLLI…LFRSAAYRQP (65 aa)) the chain is Cytoplasmic. The residue at position 226 (serine 226) is a Phosphoserine. A helical transmembrane segment spans residues 272-293 (ILIAVVLQLSQQLSGINAVFYY). D-glucose-binding positions include 282–283 (QQ) and asparagine 288. At 294–306 (STSIFEKAGVQQP) the chain is on the extracellular side. The helical transmembrane segment at 307–328 (VYATIGSGIVNTAFTVVSLFVV) threads the bilayer. Position 317 (asparagine 317) interacts with D-glucose. The Cytoplasmic segment spans residues 329–334 (ERAGRR). A helical transmembrane segment spans residues 335 to 355 (TLHLIGLAGMAGCAVLMTIAL). At 356-365 (ALLERLPWMS) the chain is on the extracellular side. Residues 366–388 (YLSIVAIFGFVAFFEVGPGPIPW) traverse the membrane as a helical segment. D-glucose is bound by residues glutamate 380 and tryptophan 388. Residues 389 to 401 (FIVAELFSQGPRP) are Cytoplasmic-facing. The chain crosses the membrane as a helical span at residues 402–422 (AAIAVAGFSNWTSNFIVGMCF). Over 423 to 429 (QYVEQLC) the chain is Extracellular. A helical transmembrane segment spans residues 430 to 450 (GPYVFIIFTVLLVLFFIFTYF). The Cytoplasmic segment spans residues 451-492 (KVPETKGRTFDEIASGFRQGGASQSDKTPEELFHPLGADSQV). Position 465 is a phosphoserine (serine 465). A disordered region spans residues 468–492 (RQGGASQSDKTPEELFHPLGADSQV). Threonine 478 carries the post-translational modification Phosphothreonine. The residue at position 490 (serine 490) is a Phosphoserine.

This sequence belongs to the major facilitator superfamily. Sugar transporter (TC 2.A.1.1) family. Glucose transporter subfamily. Found in a complex with ADD2, DMTN and SLC2A1. Interacts (via C-terminus cytoplasmic region) with DMTN. Interacts with SNX27; the interaction is required when endocytosed to prevent degradation in lysosomes and promote recycling to the plasma membrane. Interacts with GIPC (via PDZ domain). Interacts with STOM. Interacts with SGTA (via Gln-rich region). Interacts with BSG. Interacts with SMIM43; the interaction may promote SLC2A1-mediated glucose transport to meet the energy needs of mesendoderm differentiation. Post-translationally, phosphorylation at Ser-226 by PKC promotes glucose uptake by increasing cell membrane localization. Detected in brain capillary (at protein level). Detected in brain capillary.

Its subcellular location is the cell membrane. The protein resides in the photoreceptor inner segment. It carries out the reaction D-glucose(out) = D-glucose(in). Its activity is regulated as follows. The uptake of glucose is inhibited by cytochalasin B. Glucose uptake is increased in response to phorbol ester 12-O-tetradecanoylphorbol-13-acetate (TPA) treatment: TPA-induced glucose uptake requires phosphorylation at Ser-226. In terms of biological role, facilitative glucose transporter, which is responsible for constitutive or basal glucose uptake. Has a very broad substrate specificity; can transport a wide range of aldoses including both pentoses and hexoses. Most important energy carrier of the brain: present at the blood-brain barrier and assures the energy-independent, facilitative transport of glucose into the brain. In association with BSG and NXNL1, promotes retinal cone survival by increasing glucose uptake into photoreceptors. Required for mesendoderm differentiation. The polypeptide is Solute carrier family 2, facilitated glucose transporter member 1 (Bos taurus (Bovine)).